The sequence spans 612 residues: UvrABC system protein C (612 aa).

The region spanning 20 to 98 (THSGVYRMLD…IKQHRPKYNI (79 aa)) is the GIY-YIG domain. Positions 208-243 (SSVLEEISAKMYQASEDMEYEKAQVYRDQLVILRKL) constitute a UVR domain.

This sequence belongs to the UvrC family. As to quaternary structure, interacts with UvrB in an incision complex.

Its subcellular location is the cytoplasm. In terms of biological role, the UvrABC repair system catalyzes the recognition and processing of DNA lesions. UvrC both incises the 5' and 3' sides of the lesion. The N-terminal half is responsible for the 3' incision and the C-terminal half is responsible for the 5' incision. This Francisella philomiragia subsp. philomiragia (strain ATCC 25017 / CCUG 19701 / FSC 153 / O#319-036) protein is UvrABC system protein C.